A 349-amino-acid chain; its full sequence is Green-sensitive opsin-1 (349 aa).

Topologically, residues 1–36 (MNGTEGKNFYVPMSNRTGLVRSPFEYPQYYLAEPWQ) are extracellular. 2 N-linked (GlcNAc...) asparagine glycosylation sites follow: asparagine 2 and asparagine 15. The helical transmembrane segment at 37–61 (FKILALYLFFLMSMGLPINGLTLVV) threads the bilayer. At 62–73 (TAQHKKLRQPLN) the chain is on the cytoplasmic side. A helical transmembrane segment spans residues 74-99 (FILVNLAVAGTIMVCFGFTVTFYTAI). The Extracellular segment spans residues 100-113 (NGYFVLGPTGCAVE). A disulfide bond links cysteine 110 and cysteine 187. A helical membrane pass occupies residues 114–133 (GFMATLGGEVALWSLVVLAI). At 134 to 152 (ERYIVVCKPMGSFKFSSSH) the chain is on the cytoplasmic side. The helical transmembrane segment at 153 to 176 (AFAGIAFTWVMALACAAPPLFGWS) threads the bilayer. Residues 177–202 (RYIPEGMQCSCGPDYYTLNPDYNNES) are Extracellular-facing. The helical transmembrane segment at 203-230 (YVIYMFVCHFILPVAVIFFTYGRLVCTV) threads the bilayer. The Cytoplasmic segment spans residues 231–252 (KAAAAQQQDSASTQKAEREVTK). Residues 253-276 (MVILMVFGFLIAWTPYATVAAWIF) traverse the membrane as a helical segment. At 277 to 284 (FNKGADFS) the chain is on the extracellular side. The chain crosses the membrane as a helical span at residues 285–309 (AKFMAIPAFFSKSSALYNPVIYVLL). Lysine 296 is subject to N6-(retinylidene)lysine. Topologically, residues 310–349 (NKQFRNCMLTTIFCGKNPLGDDESSTVSTSKTEVSSVSPA) are cytoplasmic. A disordered region spans residues 329-349 (GDDESSTVSTSKTEVSSVSPA). Positions 334-349 (STVSTSKTEVSSVSPA) are enriched in low complexity.

It belongs to the G-protein coupled receptor 1 family. Opsin subfamily. Phosphorylated on some or all of the serine and threonine residues present in the C-terminal region. In terms of tissue distribution, the color pigments are found in the cone photoreceptor cells.

It localises to the membrane. In terms of biological role, visual pigments are the light-absorbing molecules that mediate vision. They consist of an apoprotein, opsin, covalently linked to cis-retinal. This Carassius auratus (Goldfish) protein is Green-sensitive opsin-1.